The chain runs to 341 residues: Cathepsin B-like cysteine proteinase 1 (341 aa).

The signal sequence occupies residues 1–19 (MKYLFFALCLYLYQGISEA). The propeptide at 20–88 (EVPAEQIPLE…VEDEELEENN (69 aa)) is activation peptide. Residue asparagine 103 is glycosylated (N-linked (GlcNAc...) asparagine). Disulfide bonds link cysteine 104-cysteine 133, cysteine 116-cysteine 160, cysteine 152-cysteine 218, cysteine 153-cysteine 156, cysteine 189-cysteine 222, and cysteine 197-cysteine 209. The active site involves cysteine 119. N-linked (GlcNAc...) asparagine glycosylation is present at asparagine 202. Active-site residues include histidine 288 and asparagine 308.

This sequence belongs to the peptidase C1 family.

Expression of the protease correlates with blood-feeding and suggests a role for the protease in blood digestion. This chain is Cathepsin B-like cysteine proteinase 1 (CP-1), found in Ostertagia ostertagi (Brown stomach worm).